The primary structure comprises 349 residues: Isopentenyl-diphosphate delta-isomerase (349 aa).

Residue 6-7 participates in substrate binding; sequence RK. FMN contacts are provided by residues 62–64, S93, and N122; that span reads AMT. Q152 is a substrate binding site. A Mg(2+)-binding site is contributed by E153. FMN is bound by residues K184, T214, 258-259, and 280-281; these read GG and AG.

This sequence belongs to the IPP isomerase type 2 family. As to quaternary structure, homooctamer. Dimer of tetramers. Requires FMN as cofactor. NADPH serves as cofactor. The cofactor is Mg(2+).

The protein resides in the cytoplasm. It carries out the reaction isopentenyl diphosphate = dimethylallyl diphosphate. In terms of biological role, involved in the biosynthesis of isoprenoids. Catalyzes the 1,3-allylic rearrangement of the homoallylic substrate isopentenyl (IPP) to its allylic isomer, dimethylallyl diphosphate (DMAPP). This Bacillus cereus (strain AH187) protein is Isopentenyl-diphosphate delta-isomerase.